Consider the following 460-residue polypeptide: MVTFTSEASRSRSKKVCVIGAGPAGLVSARELRKEGHKVVVLEQNEDVGGQWFYQPNVEEEDPLGRSSGSINGELKVHSSIYSSLRLTSPREIMGYSDFPFLAKKGRDMRRFPGHKELWLYLKDFSEAFGLREMIRFNVRVEFVGEKEEEDDVKKWIVRSREKFSGKVMEEIFDAVVVATGHYSHPRLPSIKGMDSWKRKQIHSHVYRVPDPFRNEVVVVVGNSMSGQDISMELVEVAKEVHLSAKTLDISSGLSKVISKHPNLLIHPQIESLEDDGKVIFVDGSWVVADTILYCTGYSYKFPFLESKGRIEVDDDRVGPLFEHTFPPCLSPSLSFVGIPRKLIGFPFFEAQAKWIAQVLSGKSSLPSPDQMLQSVDEFYRSRDLAGVPKHNTHDIADFTYCDKYADYVGFPHLEDWRKLLCLSALNNSQENLETYRDSWDDHELLQEALQSSHFTNFNS.

20–25 (GAGPAG) is a binding site for FAD. 222–227 (GNSMSG) contacts NADP(+).

It belongs to the FMO family. FAD serves as cofactor.

In terms of biological role, catalyzes the conversion of methylthioalkyl glucosinolates of any chain length into methylsulfinylalkyl glucosinolates. This is Flavin-containing monooxygenase FMO GS-OX-like 9 from Arabidopsis thaliana (Mouse-ear cress).